Consider the following 235-residue polypeptide: Glucosamine-6-phosphate deaminase (235 aa).

The active-site Proton acceptor; for enolization step is D62. N128 serves as the catalytic For ring-opening step. H130 serves as the catalytic Proton acceptor; for ring-opening step. E135 functions as the For ring-opening step in the catalytic mechanism.

The protein belongs to the glucosamine/galactosamine-6-phosphate isomerase family. NagB subfamily.

The enzyme catalyses alpha-D-glucosamine 6-phosphate + H2O = beta-D-fructose 6-phosphate + NH4(+). It participates in amino-sugar metabolism; N-acetylneuraminate degradation; D-fructose 6-phosphate from N-acetylneuraminate: step 5/5. Its function is as follows. Catalyzes the reversible isomerization-deamination of glucosamine 6-phosphate (GlcN6P) to form fructose 6-phosphate (Fru6P) and ammonium ion. The sequence is that of Glucosamine-6-phosphate deaminase from Lactococcus lactis subsp. cremoris (strain SK11).